The primary structure comprises 661 residues: Arginine--tRNA ligase, cytoplasmic (661 aa).

At methionine 1 the chain carries N-acetylmethionine. Residues 1–73 (MDGLVAQCSA…AEKRRRPTKN (73 aa)) form a could be involved in the assembly of the multisynthetase complex region. Residues 201–203 (SPN), histidine 212, tyrosine 385, aspartate 389, and glutamine 413 each bind L-arginine. Positions 202 to 213 (PNIAKEMHVGHL) match the 'HIGH' region motif. Residues 530-544 (NTAAYLLYAFTRIRS) form an interaction with tRNA region.

This sequence belongs to the class-I aminoacyl-tRNA synthetase family. Interacts (via N-terminus) with AIMP1 (via N-terminus); this stimulates its catalytic activity. Interacts (via N-terminus) with LARS2 (via C-terminus). Monomer. Part of a multisubunit complex that groups tRNA ligases for Arg (RARS1), Asp (DARS1), Gln (QARS1), Ile (IARS1), Leu (LARS1), Lys (KARS1), Met (MARS1) the bifunctional ligase for Glu and Pro (EPRS1) and the auxiliary subunits AIMP1/p43, AIMP2/p38 and EEF1E1/p18. Interacts with QARS1. Part of a complex composed of RARS1, QARS1 and AIMP1.

It localises to the cytoplasm. Its subcellular location is the cytosol. It catalyses the reaction tRNA(Arg) + L-arginine + ATP = L-arginyl-tRNA(Arg) + AMP + diphosphate. In terms of biological role, forms part of a macromolecular complex that catalyzes the attachment of specific amino acids to cognate tRNAs during protein synthesis. Modulates the secretion of AIMP1 and may be involved in generation of the inflammatory cytokine EMAP2 from AIMP1. This chain is Arginine--tRNA ligase, cytoplasmic (RARS1), found in Cricetulus griseus (Chinese hamster).